The chain runs to 388 residues: Mannitol-1-phosphate 5-dehydrogenase (388 aa).

5–16 (AIQFGGGNIGRG) contacts NAD(+). The active site involves lysine 213.

The protein belongs to the mannitol dehydrogenase family. In terms of assembly, monomer.

The catalysed reaction is D-mannitol 1-phosphate + NAD(+) = beta-D-fructose 6-phosphate + NADH + H(+). Its function is as follows. Catalyzes the NAD(H)-dependent interconversion of D-fructose 6-phosphate and D-mannitol 1-phosphate in the mannitol metabolic pathway. The sequence is that of Mannitol-1-phosphate 5-dehydrogenase (mpdA) from Aspergillus terreus (strain NIH 2624 / FGSC A1156).